Here is a 330-residue protein sequence, read N- to C-terminus: D-alanine--D-alanine ligase (330 aa).

An ATP-grasp domain is found at 120 to 326 (KLWYDALGIP…FKTFLQKAVL (207 aa)). 150–205 (AFKQWGGLFVKAACQGSSVGCYKVTSEEELAQAINGAFGYSQQVLVEKAVKPRELE) is a binding site for ATP. 3 residues coordinate Mg(2+): D280, E293, and N295.

Belongs to the D-alanine--D-alanine ligase family. It depends on Mg(2+) as a cofactor. Mn(2+) is required as a cofactor.

It localises to the cytoplasm. It catalyses the reaction 2 D-alanine + ATP = D-alanyl-D-alanine + ADP + phosphate + H(+). It functions in the pathway cell wall biogenesis; peptidoglycan biosynthesis. Cell wall formation. This chain is D-alanine--D-alanine ligase, found in Aliivibrio fischeri (strain MJ11) (Vibrio fischeri).